The primary structure comprises 330 residues: uncharacterized protein (330 aa).

Disordered stretches follow at residues 136-160 (VPPS…DESS) and 172-314 (DNEK…SQFN). A compositionally biased stretch (pro residues) spans 223-235 (PKPPAPPPPPPVP). A compositionally biased stretch (low complexity) spans 236 to 246 (ISMTPAAISVT). 3 stretches are compositionally biased toward polar residues: residues 263 to 276 (AQST…TTDE), 284 to 294 (TRSSSQSNSTV), and 304 to 314 (PASSPTFSQFN).

This is an uncharacterized protein from Danio rerio (Zebrafish).